The following is a 365-amino-acid chain: Probable caffeine synthase 2 (365 aa).

Tyr19 provides a ligand contact to S-adenosyl-L-homocysteine. Thr26 is a caffeine binding site. S-adenosyl-L-homocysteine-binding residues include Cys62, Asp99, Leu100, Ser134, and Phe135. Caffeine-binding residues include Tyr152, His155, and Trp156. A Mg(2+)-binding site is contributed by Asn173. Arg221 provides a ligand contact to caffeine. Mg(2+)-binding residues include Asp259, Phe261, and Asn262. Caffeine is bound at residue Phe317.

It belongs to the methyltransferase superfamily. Type-7 methyltransferase family. It depends on Mg(2+) as a cofactor.

It catalyses the reaction 7-methylxanthine + S-adenosyl-L-methionine = theobromine + S-adenosyl-L-homocysteine + H(+). The enzyme catalyses theobromine + S-adenosyl-L-methionine = caffeine + S-adenosyl-L-homocysteine + H(+). The catalysed reaction is 1,7-dimethylxanthine + S-adenosyl-L-methionine = caffeine + S-adenosyl-L-homocysteine + H(+). It functions in the pathway alkaloid biosynthesis. In terms of biological role, may be involved in the biosynthesis of caffeine. Catalyzes the conversion of 7-methylxanthine (7mX) to theobromine and of theobromine to caffeine. Has 1-N-methylation activity. The protein is Probable caffeine synthase 2 of Camellia sinensis (Tea plant).